Consider the following 202-residue polypeptide: Small ribosomal subunit protein uS5 (202 aa).

Positions 50-113 constitute an S5 DRBM domain; the sequence is LKQELLNLNL…REAKLNITPV (64 aa).

Belongs to the universal ribosomal protein uS5 family. Part of the 30S ribosomal subunit. Contacts protein S4.

Functionally, with S4 and S12 plays an important role in translational accuracy. This is Small ribosomal subunit protein uS5 from Pyrobaculum calidifontis (strain DSM 21063 / JCM 11548 / VA1).